The following is a 218-amino-acid chain: Ribose-5-phosphate isomerase A (218 aa).

Substrate is bound by residues K7, 28-31, 81-84, and 94-97; these read TGST, DGAD, and KGGG. E103 functions as the Proton acceptor in the catalytic mechanism. K121 is a substrate binding site.

It belongs to the ribose 5-phosphate isomerase family. As to quaternary structure, homodimer.

It catalyses the reaction aldehydo-D-ribose 5-phosphate = D-ribulose 5-phosphate. Its pathway is carbohydrate degradation; pentose phosphate pathway; D-ribose 5-phosphate from D-ribulose 5-phosphate (non-oxidative stage): step 1/1. Its function is as follows. Catalyzes the reversible conversion of ribose-5-phosphate to ribulose 5-phosphate. This is Ribose-5-phosphate isomerase A from Vibrio vulnificus (strain YJ016).